A 209-amino-acid polypeptide reads, in one-letter code: MNIFLSYIVLGLSLSAPVGPVNAAQIDKGIKNGFWHAWIFGLGAMTADGLYMLFIYFGLSQFLTAPFVKTFLWLFGFFVLTYTGIETLKNVREPMDVRSSRGKPSYRKTFASGFLISLSNPLSILFWLGIYGSILAKTAEAYNMNQLLIYSSGIMIGILIWDFCMAITASTFRNLLHEKLLRGLTGIAGVSLLVFGFYFGYQGIKQLLG.

Helical transmembrane passes span 1–21, 39–59, 62–82, 110–130, 147–167, and 184–204; these read MNIF…VGPV, IFGL…YFGL, FLTA…VLTY, FASG…WLGI, LLIY…CMAI, and LTGI…YQGI.

This sequence belongs to the Rht family.

It localises to the cell membrane. The chain is Putative amino acid efflux protein YcgF (ycgF) from Bacillus subtilis (strain 168).